Here is a 268-residue protein sequence, read N- to C-terminus: Regulatory protein zeste (268 aa).

Residues 1–72 (TAEEKEVLYT…WLNSRLRKQY (72 aa)) mediate DNA binding. The span at 94–108 (VSVASAVPQQQQQQH) shows a compositional bias: low complexity. Residues 94–133 (VSVASAVPQQQQQQHHQQHDNVKEEPEYQISPDASEHNPQ) form a disordered region. The span at 110–119 (QQHDNVKEEP) shows a compositional bias: basic and acidic residues.

Self-associates forming complexes of several hundred monomers.

The protein localises to the nucleus. Involved in transvection phenomena (= synapsis-dependent gene expression), where the synaptic pairing of chromosomes carrying genes with which zeste interacts influences the expression of these genes. Zeste binds to DNA and stimulates transcription from a nearby promoter. The sequence is that of Regulatory protein zeste (z) from Drosophila sechellia (Fruit fly).